The sequence spans 313 residues: Ribose-phosphate pyrophosphokinase (313 aa).

ATP is bound by residues 37–39 (DGE) and 96–97 (RQ). Mg(2+)-binding residues include H131 and D170. The active site involves K193. D-ribose 5-phosphate is bound by residues R195, D219, and 223–227 (DTAGT).

This sequence belongs to the ribose-phosphate pyrophosphokinase family. Class I subfamily. As to quaternary structure, homohexamer. The cofactor is Mg(2+).

The protein localises to the cytoplasm. The enzyme catalyses D-ribose 5-phosphate + ATP = 5-phospho-alpha-D-ribose 1-diphosphate + AMP + H(+). The protein operates within metabolic intermediate biosynthesis; 5-phospho-alpha-D-ribose 1-diphosphate biosynthesis; 5-phospho-alpha-D-ribose 1-diphosphate from D-ribose 5-phosphate (route I): step 1/1. Functionally, involved in the biosynthesis of the central metabolite phospho-alpha-D-ribosyl-1-pyrophosphate (PRPP) via the transfer of pyrophosphoryl group from ATP to 1-hydroxyl of ribose-5-phosphate (Rib-5-P). This Pseudomonas putida (strain ATCC 47054 / DSM 6125 / CFBP 8728 / NCIMB 11950 / KT2440) protein is Ribose-phosphate pyrophosphokinase.